Consider the following 558-residue polypeptide: Nuclear speckle splicing regulatory protein 1 (558 aa).

A disordered region spans residues 21-54 (PVLQKPSVFGNDSDDDDETSVSESLQREAAKKQA). A phosphoserine mark is found at S27 and S33. Residues 104–170 (IHNLLKAVEI…REKRAAALEA (67 aa)) are a coiled coil. The segment at 106 to 170 (NLLKAVEIRK…REKRAAALEA (65 aa)) is necessary for alternative splicing activity. Residues K199 and K210 each participate in a glycyl lysine isopeptide (Lys-Gly) (interchain with G-Cter in SUMO2) cross-link. Positions 204–215 (EARSGIKEEKSR) are enriched in basic and acidic residues. Residues 204–534 (EARSGIKEEK…KRNNEETVMS (331 aa)) are disordered. Residues 216 to 226 (GFSNEVSSKNR) show a composition bias toward polar residues. S248, S254, and S255 each carry phosphoserine. A compositionally biased stretch (basic and acidic residues) spans 250 to 280 (FDAKSSADDEIEETRVNCRREKVIETPENDF). T275 bears the Phosphothreonine mark. K281 participates in a covalent cross-link: Glycyl lysine isopeptide (Lys-Gly) (interchain with G-Cter in SUMO2). Residues 299 to 310 (STRHHTKGSRTS) show a composition bias toward basic residues. 3 stretches are compositionally biased toward basic and acidic residues: residues 311–442 (RGHE…KREV), 449–487 (RNQD…RNQE), and 501–517 (RLTE…ERPP). Positions 379–427 (KREKDREKYSQREQERDRQQNDQNRPSEKGEKEEKSKAKEEHMKVRKER) form a coiled coil. Phosphoserine is present on S457.

It belongs to the NSRP1 family. In terms of assembly, interacts (via C-terminus) with SRSF1. Interacts (via C-terminus) with SRSF2. In terms of tissue distribution, expressed in dendritic cells, T-cells, B-cells and natural killer cells. Expressed in secondary lymphoid organs such as spleen and mesenteric, axillary and brachial lymph nodes.

Its subcellular location is the nucleus. It localises to the nucleus speckle. Its function is as follows. RNA-binding protein that mediates pre-mRNA alternative splicing regulation. This chain is Nuclear speckle splicing regulatory protein 1 (NSRP1), found in Homo sapiens (Human).